We begin with the raw amino-acid sequence, 213 residues long: Peptide methionine sulfoxide reductase MsrA (213 aa).

Cysteine 52 is a catalytic residue.

The protein belongs to the MsrA Met sulfoxide reductase family.

The enzyme catalyses L-methionyl-[protein] + [thioredoxin]-disulfide + H2O = L-methionyl-(S)-S-oxide-[protein] + [thioredoxin]-dithiol. It carries out the reaction [thioredoxin]-disulfide + L-methionine + H2O = L-methionine (S)-S-oxide + [thioredoxin]-dithiol. In terms of biological role, has an important function as a repair enzyme for proteins that have been inactivated by oxidation. Catalyzes the reversible oxidation-reduction of methionine sulfoxide in proteins to methionine. The protein is Peptide methionine sulfoxide reductase MsrA of Enterobacter sp. (strain 638).